We begin with the raw amino-acid sequence, 188 residues long: Elongation factor P (188 aa).

Belongs to the elongation factor P family.

Its subcellular location is the cytoplasm. It participates in protein biosynthesis; polypeptide chain elongation. Involved in peptide bond synthesis. Stimulates efficient translation and peptide-bond synthesis on native or reconstituted 70S ribosomes in vitro. Probably functions indirectly by altering the affinity of the ribosome for aminoacyl-tRNA, thus increasing their reactivity as acceptors for peptidyl transferase. This is Elongation factor P from Methylorubrum populi (strain ATCC BAA-705 / NCIMB 13946 / BJ001) (Methylobacterium populi).